A 734-amino-acid polypeptide reads, in one-letter code: Polyribonucleotide nucleotidyltransferase (734 aa).

2 residues coordinate Mg(2+): D503 and D509. The KH domain occupies 570–629 (PKLSTIQVPVDAIGMIIGKGGETIRSITEETGAQINVDDDGTVTISSPNGESAAAAIETI). An S1 motif domain is found at 639 to 713 (GTIYMGKVKD…GKIRYALSIK (75 aa)).

The protein belongs to the polyribonucleotide nucleotidyltransferase family. Requires Mg(2+) as cofactor.

It is found in the cytoplasm. The enzyme catalyses RNA(n+1) + phosphate = RNA(n) + a ribonucleoside 5'-diphosphate. Involved in mRNA degradation. Catalyzes the phosphorolysis of single-stranded polyribonucleotides processively in the 3'- to 5'-direction. In Chlorobium phaeobacteroides (strain BS1), this protein is Polyribonucleotide nucleotidyltransferase.